The chain runs to 204 residues: MKISKRQQDIYEFIKSEVKEKGYPPSVREIGEAVGLASSSTVHGHLARLEGKGLIRRDPTKPRAIEILSLEDEAETPNVVNIPIIGKVTAGMPITAIENIEEYFPLPEYMAAGETNVFMLEIDGESMINAGILDGDKVIVRQQSSAINGEIVVAMTDENEATCKRFYKEANHFRLQPENDALEPIILNNVTILGKVIGLYRDIH.

The segment at residues 27–47 (VREIGEAVGLASSSTVHGHLA) is a DNA-binding region (H-T-H motif). Residues Ser126 and Lys164 each act as for autocatalytic cleavage activity in the active site.

Belongs to the peptidase S24 family. Homodimer.

The catalysed reaction is Hydrolysis of Ala-|-Gly bond in repressor LexA.. Its function is as follows. Represses a number of genes involved in the response to DNA damage (SOS response), including recA and lexA. In the presence of single-stranded DNA, RecA interacts with LexA causing an autocatalytic cleavage which disrupts the DNA-binding part of LexA, leading to derepression of the SOS regulon and eventually DNA repair. This Listeria innocua serovar 6a (strain ATCC BAA-680 / CLIP 11262) protein is LexA repressor.